The primary structure comprises 392 residues: Imidazolonepropionase (392 aa).

Residues His70 and His72 each coordinate Fe(3+). Positions 70 and 72 each coordinate Zn(2+). Residues Arg79, Tyr137, and His164 each contribute to the 4-imidazolone-5-propanoate site. Tyr137 lines the N-formimidoyl-L-glutamate pocket. Fe(3+) is bound at residue His227. His227 contributes to the Zn(2+) binding site. Position 230 (Gln230) interacts with 4-imidazolone-5-propanoate. Residue Asp301 coordinates Fe(3+). Asp301 provides a ligand contact to Zn(2+). The N-formimidoyl-L-glutamate site is built by Asn303 and Gly305. Thr306 contacts 4-imidazolone-5-propanoate.

Belongs to the metallo-dependent hydrolases superfamily. HutI family. Zn(2+) serves as cofactor. It depends on Fe(3+) as a cofactor.

The protein resides in the cytoplasm. It catalyses the reaction 4-imidazolone-5-propanoate + H2O = N-formimidoyl-L-glutamate. Its pathway is amino-acid degradation; L-histidine degradation into L-glutamate; N-formimidoyl-L-glutamate from L-histidine: step 3/3. Functionally, catalyzes the hydrolytic cleavage of the carbon-nitrogen bond in imidazolone-5-propanoate to yield N-formimidoyl-L-glutamate. It is the third step in the universal histidine degradation pathway. The chain is Imidazolonepropionase from Nocardia farcinica (strain IFM 10152).